The chain runs to 271 residues: MNKSPIQAVIFDWAGTIVDFGSFAPTSIFVEAFKQGFDFEIDLEEAREPMGLGKWDHIQAVGRIPAVDKRWNEKFGRSMISEDIDAIYAAFMPLQKAKVADHAEPILNAIEVVNGLKDKGIKIGSCSGYPREVMDVLIPVAADYGYQPDYVVATDDLPQGGRPAPFMALKNVIELGVSDVKACVKVDDSAPGIFEGHNAGMWTVGLLLSGNEAGLTFEEYQAADEATLEKAREKARAKLLKSSPHYLIDTIADFPEVVADIERRLAAGERP.

Aspartate 12 acts as the Nucleophile in catalysis. Mg(2+) contacts are provided by aspartate 12 and alanine 14. Lysine 54 functions as the Schiff-base intermediate with substrate in the catalytic mechanism. Aspartate 188 is a Mg(2+) binding site.

This sequence belongs to the HAD-like hydrolase superfamily. PhnX family. Homodimer. Requires Mg(2+) as cofactor.

It carries out the reaction phosphonoacetaldehyde + H2O = acetaldehyde + phosphate + H(+). Its function is as follows. Involved in phosphonate degradation. In Vibrio vulnificus (strain CMCP6), this protein is Phosphonoacetaldehyde hydrolase.